Here is a 721-residue protein sequence, read N- to C-terminus: Catalase-peroxidase 1 (721 aa).

A cross-link (tryptophyl-tyrosyl-methioninium (Trp-Tyr) (with M-249)) is located at residues tryptophan 98–tyrosine 223. Catalysis depends on histidine 99, which acts as the Proton acceptor. A cross-link (tryptophyl-tyrosyl-methioninium (Tyr-Met) (with W-98)) is located at residues tyrosine 223 to methionine 249. Heme b is bound at residue histidine 264.

The protein belongs to the peroxidase family. Peroxidase/catalase subfamily. In terms of assembly, homodimer or homotetramer. Heme b serves as cofactor. Post-translationally, formation of the three residue Trp-Tyr-Met cross-link is important for the catalase, but not the peroxidase activity of the enzyme.

It catalyses the reaction H2O2 + AH2 = A + 2 H2O. The catalysed reaction is 2 H2O2 = O2 + 2 H2O. Functionally, bifunctional enzyme with both catalase and broad-spectrum peroxidase activity. In Legionella pneumophila (strain Paris), this protein is Catalase-peroxidase 1.